Consider the following 101-residue polypeptide: MVSLSHYLVLGAVLFAIGVVGIFLNRKNVIILLMSIELMLLAVNINFVAFSYYLQDIAGQIFVFFILTVAAAEAAIGLAILVALFRNIRTINVDDLDRLKG.

Helical transmembrane passes span 4–24, 30–50, and 61–81; these read LSHY…GIFL, IILL…FVAF, and IFVF…LAIL.

The protein belongs to the complex I subunit 4L family. As to quaternary structure, NDH-1 is composed of 14 different subunits. Subunits NuoA, H, J, K, L, M, N constitute the membrane sector of the complex.

The protein localises to the cell inner membrane. The enzyme catalyses a quinone + NADH + 5 H(+)(in) = a quinol + NAD(+) + 4 H(+)(out). Functionally, NDH-1 shuttles electrons from NADH, via FMN and iron-sulfur (Fe-S) centers, to quinones in the respiratory chain. The immediate electron acceptor for the enzyme in this species is believed to be ubiquinone. Couples the redox reaction to proton translocation (for every two electrons transferred, four hydrogen ions are translocated across the cytoplasmic membrane), and thus conserves the redox energy in a proton gradient. The sequence is that of NADH-quinone oxidoreductase subunit K from Nitrosomonas eutropha (strain DSM 101675 / C91 / Nm57).